We begin with the raw amino-acid sequence, 487 residues long: Lysophospholipid acyltransferase 5 (487 aa).

Alanine 2 bears the N-acetylalanine mark. Transmembrane regions (helical) follow at residues 44–64 (LIFSIFLGYPLALFYRHYLFY), 84–104 (FNFGHQFYHSLLCVVLQFLIL), 111–131 (VTAVITTLCFQMAYLLAGYYY), and 180–200 (GVPSLLEVAGFSYFYGAFLVG). A glycan (N-linked (GlcNAc...) asparagine) is linked at asparagine 225. Transmembrane regions (helical) follow at residues 236-256 (LGLVYLVGYTLLSPHITDDYL) and 285-305 (VTCWLVTEGVCILSGLGFNGF). 2 N-linked (GlcNAc...) asparagine glycosylation sites follow: asparagine 308 and asparagine 331. Active-site residues include asparagine 338 and histidine 374. 3 helical membrane passes run 364–384 (GLSLLFLALWHGLHSGYLICF), 422–442 (LVQQTIHWLFMGYSMTAFCLF), and 453–473 (SIYFLGHVFFLSLLFILPYIH). The short motif at 484 to 487 (KKRE) is the Di-lysine motif element.

The protein belongs to the membrane-bound acyltransferase family. Detected ubiquitously, with high expression levels in small intestine, brown adipose tissue, liver, kidney and testis. Expressed in liver and both proximal and distal small intestine (at protein level). Expressed in peritoneal macrophages.

It localises to the endoplasmic reticulum membrane. It catalyses the reaction a 1-acyl-sn-glycero-3-phosphocholine + an acyl-CoA = a 1,2-diacyl-sn-glycero-3-phosphocholine + CoA. The catalysed reaction is a 1-acyl-sn-glycero-3-phosphoethanolamine + an acyl-CoA = a 1,2-diacyl-sn-glycero-3-phosphoethanolamine + CoA. The enzyme catalyses a 1-acyl-sn-glycero-3-phospho-L-serine + an acyl-CoA = a 1,2-diacyl-sn-glycero-3-phospho-L-serine + CoA. It carries out the reaction (9Z,12Z)-octadecadienoyl-CoA + a 1-acyl-sn-glycero-3-phosphocholine = 1-acyl-2-(9Z,12Z)-octadecadienoyl-sn-glycero-3-phosphocholine + CoA. It catalyses the reaction (5Z,8Z,11Z,14Z)-eicosatetraenoyl-CoA + a 1-acyl-sn-glycero-3-phosphocholine = 1-acyl-2-(5Z,8Z,11Z,14Z-eicosatetraenoyl)-sn-glycero-3-phosphocholine + CoA. The catalysed reaction is dodecanoyl-CoA + 1-hexadecanoyl-sn-glycero-3-phosphocholine = 1-hexadecanoyl-2-dodecanoyl-sn-glycero-3-phosphocholine + CoA. The enzyme catalyses octadecanoyl-CoA + 1-hexadecanoyl-sn-glycero-3-phosphocholine = 1-hexadecanoyl-2-octadecanoyl-sn-glycero-3-phosphocholine + CoA. It carries out the reaction 1-dodecanoyl-sn-glycero-3-phosphocholine + hexadecanoyl-CoA = 1-dodecanoyl-2-hexadecanoyl-sn-glycero-3-phosphocholine + CoA. It catalyses the reaction 1-tetradecanoyl-sn-glycero-3-phosphocholine + hexadecanoyl-CoA = 1-tetradecanoyl-2-hexadecanoyl-sn-glycero-3-phosphocholine + CoA. The catalysed reaction is 1-hexadecanoyl-sn-glycero-3-phosphocholine + hexadecanoyl-CoA = 1,2-dihexadecanoyl-sn-glycero-3-phosphocholine + CoA. The enzyme catalyses 1-octadecanoyl-sn-glycero-3-phosphocholine + hexadecanoyl-CoA = 1-octadecanoyl-2-hexadecanoyl-sn-glycero-3-phosphocholine + CoA. It carries out the reaction 1-(9Z-octadecenoyl)-sn-glycero-3-phosphocholine + hexadecanoyl-CoA = 1-(9Z-octadecenoyl)-2-hexadecanoyl-sn-glycero-3-phosphocholine + CoA. It catalyses the reaction (9Z)-hexadecenoyl-CoA + 1-hexadecanoyl-sn-glycero-3-phosphocholine = 1-hexadecanoyl-2-(9Z-hexadecenoyl)-sn-glycero-3-phosphocholine + CoA. The catalysed reaction is 1-hexadecanoyl-sn-glycero-3-phosphocholine + (9Z)-octadecenoyl-CoA = 1-hexadecanoyl-2-(9Z-octadecenoyl)-sn-glycero-3-phosphocholine + CoA. The enzyme catalyses (9Z,12Z)-octadecadienoyl-CoA + 1-hexadecanoyl-sn-glycero-3-phosphocholine = 1-hexadecanoyl-2-(9Z,12Z-octadecadienoyl)-sn-glycero-3-phosphocholine + CoA. It carries out the reaction 1-dodecanoyl-sn-glycero-3-phosphocholine + (5Z,8Z,11Z,14Z)-eicosatetraenoyl-CoA = 1-dodecanoyl-2-(5Z,8Z,11Z,14Z)-eicosatetraenoyl-sn-glycero-3-phosphocholine + CoA. It catalyses the reaction (5Z,8Z,11Z,14Z)-eicosatetraenoyl-CoA + 1-hexadecanoyl-sn-glycero-3-phosphocholine = 1-hexadecanoyl-2-(5Z,8Z,11Z,14Z-eicosatetraenoyl)-sn-glycero-3-phosphocholine + CoA. The catalysed reaction is 1-octadecanoyl-sn-glycero-3-phosphocholine + (5Z,8Z,11Z,14Z)-eicosatetraenoyl-CoA = 1-octadecanoyl-2-(5Z,8Z,11Z,14Z-eicosatetraenoyl)-sn-glycero-3-phosphocholine + CoA. The enzyme catalyses 1-eicosanoyl-sn-glycero-3-phosphocholine + (5Z,8Z,11Z,14Z)-eicosatetraenoyl-CoA = 1-eicosanoyl-2-(5Z,8Z,11Z,14Z)-eicosatetraenoyl-sn-glycero-3-phosphocholine + CoA. It carries out the reaction 1-(9Z-octadecenoyl)-sn-glycero-3-phosphocholine + (9Z)-octadecenoyl-CoA = 1,2-di-(9Z-octadecenoyl)-sn-glycero-3-phosphocholine + CoA. It catalyses the reaction 1-(9Z-octadecenoyl)-sn-glycero-3-phosphocholine + (9Z,12Z)-octadecadienoyl-CoA = 1-(9Z)-octadecenoyl-2-(9Z,12Z)-octadecadienoyl-sn-glycero-3-phosphocholine + CoA. The catalysed reaction is 1-(9Z-octadecenoyl)-sn-glycero-3-phosphocholine + (5Z,8Z,11Z,14Z)-eicosatetraenoyl-CoA = 1-(9Z)-octadecenoyl-2-(5Z,8Z,11Z,14Z)-icosatetraenoyl-sn-glycero-3-phosphocholine + CoA. The enzyme catalyses a 1-acyl-sn-glycero-3-phosphoethanolamine + (9Z,12Z)-octadecadienoyl-CoA = 1-acyl-2-(9Z,12Z)-octadecadienoyl-sn-glycero-3-phosphoethanolamine + CoA. It carries out the reaction 1-(9Z-octadecenoyl)-sn-glycero-3-phosphoethanolamine + (9Z,12Z)-octadecadienoyl-CoA = 1-(9Z)-octadecenoyl-2-(9Z,12Z)-octadecadienoyl-sn-glycero-3-phosphoethanolamine + CoA. It catalyses the reaction 1-(10Z-heptadecenoyl)-sn-glycero-3-phosphoethanolamine + (9Z,12Z)-octadecadienoyl-CoA = 1-(10Z-heptadecenoyl)-2-(9Z,12Z-octadecadienoyl)-sn-glycero-3-phosphoethanolamine + CoA. The catalysed reaction is a 1-acyl-sn-glycero-3-phosphoethanolamine + (5Z,8Z,11Z,14Z)-eicosatetraenoyl-CoA = 1-acyl-2-(5Z,8Z,11Z,14Z)-eicosatetraenoyl-sn-glycero-3-phosphoethanolamine + CoA. The enzyme catalyses 1-hexadecanoyl-sn-glycero-3-phosphoethanolamine + (5Z,8Z,11Z,14Z)-eicosatetraenoyl-CoA = 1-hexadecanoyl-2-(5Z,8Z,11Z,14Z-eicosatetraenoyl)-sn-glycero-3-phosphoethanolamine + CoA. It carries out the reaction 1-(9Z-octadecenoyl)-sn-glycero-3-phosphoethanolamine + (5Z,8Z,11Z,14Z)-eicosatetraenoyl-CoA = 1-(9Z)-octadecenoyl-2-(5Z,8Z,11Z,14Z)-eicosatetraenoyl-sn-glycero-3-phosphoethanolamine + CoA. It catalyses the reaction 1-(10Z-heptadecenoyl)-sn-glycero-3-phosphoethanolamine + (5Z,8Z,11Z,14Z)-eicosatetraenoyl-CoA = 1-(10Z-heptadecenoyl)-2-(5Z,8Z,11Z,14Z-eicosatetraenoyl)-sn-glycero-3-phosphoethanolamine + CoA. The catalysed reaction is a 1-O-(1Z-alkenyl)-sn-glycero-3-phosphoethanolamine + (5Z,8Z,11Z,14Z)-eicosatetraenoyl-CoA = 1-O-(1Z)-alkenyl-2-(5Z,8Z,11Z,14Z)-eicosatetraenoyl-sn-glycero-3-phosphoethanolamine + CoA. The enzyme catalyses a 1-acyl-sn-glycero-3-phospho-L-serine + (9Z,12Z)-octadecadienoyl-CoA = 1-acyl-2-(9Z,12Z-octadecadienoyl)-sn-glycero-3-phospho-L-serine + CoA. It carries out the reaction a 1-acyl-sn-glycero-3-phospho-L-serine + (5Z,8Z,11Z,14Z)-eicosatetraenoyl-CoA = 1-acyl-2-(5Z,8Z,11Z,14Z-eicosatetraenoyl)-sn-glycero-3-phospho-L-serine + CoA. It catalyses the reaction 1-hexadecanoyl-sn-glycero-3-phospho-L-serine + (9Z)-octadecenoyl-CoA = 1-hexadecanoyl-2-(9Z-octadecenoyl)-sn-glycero-3-phospho-L-serine + CoA. The catalysed reaction is 1-(9Z-octadecenoyl)-sn-glycero-3-phospho-L-serine + (9Z)-octadecenoyl-CoA = 1,2-di-(9Z)-octadecenoyl-sn-glycero-3-phospho-L-serine + CoA. The enzyme catalyses 1-hexadecanoyl-sn-glycero-3-phospho-L-serine + (9Z,12Z)-octadecadienoyl-CoA = 1-hexadecanoyl-2-(9Z,12Z-octadecadienoyl)-sn-glycero-3-phospho-L-serine + CoA. It carries out the reaction 1-(9Z-octadecenoyl)-sn-glycero-3-phospho-L-serine + (9Z,12Z)-octadecadienoyl-CoA = 1-(9Z-octadecenoyl)-2-(9Z,12Z-octadienoyl)-sn-glycero-3-phospho-L-serine + CoA. It catalyses the reaction 1-hexadecanoyl-sn-glycero-3-phospho-L-serine + (5Z,8Z,11Z,14Z)-eicosatetraenoyl-CoA = 1-hexadecanoyl-2-(5Z,8Z,11Z,14Z-eicosatetraenoyl)-sn-glycero-3-phospho-L-serine + CoA. The catalysed reaction is 1-(9Z-octadecenoyl)-sn-glycero-3-phospho-L-serine + (5Z,8Z,11Z,14Z)-eicosatetraenoyl-CoA = 1-(9Z-octadecenoyl)-2-(5Z,8Z,11Z,14Z-eicosatetraenoyl)-sn-glycero-3-phospho-L-serine + CoA. The protein operates within lipid metabolism; phospholipid metabolism. In terms of biological role, lysophospholipid O-acyltransferase (LPLAT) that catalyzes the reacylation step of the phospholipid remodeling process also known as the Lands cycle. Catalyzes transfer of the fatty acyl chain from fatty acyl-CoA to 1-acyl lysophospholipid to form various classes of phospholipids. Converts 1-acyl lysophosphatidylcholine (LPC) into phosphatidylcholine (PC) (LPCAT activity), 1-acyl lysophosphatidylserine (LPS) into phosphatidylserine (PS) (LPSAT activity) and 1-acyl lysophosphatidylethanolamine (LPE) into phosphatidylethanolamine (PE) (LPEAT activity). Favors polyunsaturated fatty acyl-CoAs as acyl donors compared to saturated fatty acyl-CoAs. Has higher activity for LPC acyl acceptors compared to LPEs and LPSs. Can also transfer the fatty acyl chain from fatty acyl-CoA to 1-O-alkyl lysophospholipid or 1-O-alkenyl lysophospholipid with lower efficiency. Acts as a major LPC O-acyltransferase in liver and intestine. As a component of the liver X receptor/NR1H3 or NR1H2 signaling pathway, mainly catalyzes the incorporation of arachidonate into PCs of endoplasmic reticulum (ER) membranes, increasing membrane dynamics and enabling triacylglycerols transfer to nascent very low-density lipoprotein (VLDL) particles. Promotes processing of sterol regulatory protein SREBF1 in hepatocytes, likely by facilitating the translocation of SREBF1-SCAP complex from ER to the Golgi apparatus. Participates in mechanisms by which the liver X receptor/NR1H3 or NR1H2 signaling pathway counteracts lipid-induced ER stress response and inflammation. Down-regulates hepatic inflammation by limiting arachidonic acid availability for synthesis of inflammatory eicosanoids, such as prostaglandins. In enterocytes, acts as a component of a gut-brain feedback loop that coordinates dietary lipid absorption and food intake. Regulates the abundance of PCs containing linoleate and arachidonate in enterocyte membranes, enabling passive diffusion of fatty acids and cholesterol across the membrane for efficient chylomicron assembly. In the intestinal crypt, acts as a component of dietary-responsive phospholipid-cholesterol axis, regulating the biosynthesis of cholesterol and its mitogenic effects on intestinal stem cells. This Mus musculus (Mouse) protein is Lysophospholipid acyltransferase 5 (Lpcat3).